A 125-amino-acid polypeptide reads, in one-letter code: uncharacterized protein (125 aa).

In terms of domain architecture, PRD spans 15 to 121 (QINQSIIDVI…HSLVLEQKQL (107 aa)).

This is an uncharacterized protein from Haemophilus influenzae (strain ATCC 51907 / DSM 11121 / KW20 / Rd).